The following is a 442-amino-acid chain: D-galactonate dehydratase family member SSLG_02014 (442 aa).

His161 is a substrate binding site. Tyr197 serves as the catalytic Proton donor/acceptor. Asp246 contacts Mg(2+). The active-site Proton donor/acceptor is the His248. Positions 272 and 298 each coordinate Mg(2+). Substrate-binding residues include Glu298, Arg319, His348, Asp352, and Glu375.

Belongs to the mandelate racemase/muconate lactonizing enzyme family. GalD subfamily. Mg(2+) serves as cofactor.

The enzyme catalyses D-mannonate = 2-dehydro-3-deoxy-D-gluconate + H2O. Its function is as follows. Has low D-mannonate dehydratase activity (in vitro), suggesting that this is not a physiological substrate and that it has no significant role in D-mannonate degradation in vivo. Has no detectable activity with a panel of 70 other acid sugars (in vitro). The protein is D-galactonate dehydratase family member SSLG_02014 of Streptomyces sp. (strain SPB78).